The chain runs to 699 residues: DNA ligase (699 aa).

Residues 1-29 (MSDADVDAESNPYLRDPPTEFEPAESLSR) are disordered. NAD(+) is bound by residues 60–64 (DAAYD), 108–109 (SI), and E137. K139 acts as the N6-AMP-lysine intermediate in catalysis. NAD(+) contacts are provided by R160, E196, K311, and K335. C425, C428, C441, and C447 together coordinate Zn(2+). The BRCT domain occupies 613–666 (SGGDELDGLTFVVTGTLAASRSDVTELVESHGGNVTGSVSGNTDYLVVGENPGR).

Belongs to the NAD-dependent DNA ligase family. LigA subfamily. Requires Mg(2+) as cofactor. It depends on Mn(2+) as a cofactor.

It catalyses the reaction NAD(+) + (deoxyribonucleotide)n-3'-hydroxyl + 5'-phospho-(deoxyribonucleotide)m = (deoxyribonucleotide)n+m + AMP + beta-nicotinamide D-nucleotide.. Its activity is regulated as follows. Displays maximal in vitro activity at high salt levels. In terms of biological role, DNA ligase that catalyzes the formation of phosphodiester linkages between 5'-phosphoryl and 3'-hydroxyl groups in double-stranded DNA using NAD as a coenzyme and as the energy source for the reaction. It is essential for DNA replication and repair of damaged DNA. The sequence is that of DNA ligase from Haloferax volcanii (strain ATCC 29605 / DSM 3757 / JCM 8879 / NBRC 14742 / NCIMB 2012 / VKM B-1768 / DS2) (Halobacterium volcanii).